A 302-amino-acid polypeptide reads, in one-letter code: 1D-myo-inositol 2-acetamido-2-deoxy-alpha-D-glucopyranoside deacetylase (302 aa).

Residues H13, D16, and H155 each coordinate Zn(2+).

This sequence belongs to the MshB deacetylase family. It depends on Zn(2+) as a cofactor.

The enzyme catalyses 1D-myo-inositol 2-acetamido-2-deoxy-alpha-D-glucopyranoside + H2O = 1D-myo-inositol 2-amino-2-deoxy-alpha-D-glucopyranoside + acetate. In terms of biological role, catalyzes the deacetylation of 1D-myo-inositol 2-acetamido-2-deoxy-alpha-D-glucopyranoside (GlcNAc-Ins) in the mycothiol biosynthesis pathway. This Nocardioides sp. (strain ATCC BAA-499 / JS614) protein is 1D-myo-inositol 2-acetamido-2-deoxy-alpha-D-glucopyranoside deacetylase.